A 257-amino-acid polypeptide reads, in one-letter code: TLC domain-containing protein 3A (257 aa).

The next 7 membrane-spanning stretches (helical) occupy residues 1 to 21, 42 to 62, 71 to 91, 114 to 134, 142 to 162, 181 to 201, and 220 to 240; these read MLLTLASGALFFPGLFALSIW, LVSSVQAVLATWAGLTVIISC, WLATEYVWFLIPYMIYDFYAM, LIENRLMVTHHTVILLFLVPI, LGDFFVGCIFTAELSTPFVSL, GILTVTTFLFCRILLFPFMYW, and LHCNMANAVLISPQLYWFSLL. The TLC domain occupies 33–249; sequence DDCLTVGTRL…LCKKAARLFD (217 aa).

Interacts with GGT7 isoform 3 and SLC3A2.

The protein localises to the cell membrane. In Mus musculus (Mouse), this protein is TLC domain-containing protein 3A (Tlcd3a).